Reading from the N-terminus, the 239-residue chain is Ribosomal RNA small subunit methyltransferase G (239 aa).

S-adenosyl-L-methionine-binding positions include Gly-78, Phe-83, 129-130, and Arg-148; that span reads AE.

The protein belongs to the methyltransferase superfamily. RNA methyltransferase RsmG family.

The protein localises to the cytoplasm. Its function is as follows. Specifically methylates the N7 position of a guanine in 16S rRNA. This Alkaliphilus oremlandii (strain OhILAs) (Clostridium oremlandii (strain OhILAs)) protein is Ribosomal RNA small subunit methyltransferase G.